The chain runs to 2360 residues: MGNQRNRVNLNPFRFWVFELREILREIKNYRYRYLGPFNSVGSFIHIFVHQERFLKLLDPRIWSVLRSQGSTGVVLFLVAVLIYRINNRNMIERKNIYLTGLLPIPTNFAGPRNETLEESFLSSNINRLIVSLLHLPKVKRLSESCFLDPKESTRVLPITKWRNWIGKRRDSSQLKGSSDQSRDHFDSIGTEDSEYHTLINQREIQQRKERSSLLDPSFLQTERTEIESDRFSKGLSGSSSKSRLFTEGEKEMNNHLPPEEIEEFLGNPTRSILSFFSDEWSELHLGSNPTERSTVDQKLLKKEQEVSFAPFRRSETKEIVNLFKTMAYLQKTVSIHPISSDPGCDMVPKDELDSEERFQEMADLFTLSITEPDLVYHKGFAFSIDSSVLDQKQFLAEARDESKKKSLLVLPPVFYQENESFYRRIRKRGVQISCGNDLEDPKPKIVVFASNNIVEAVNQYRWIRNLIQIQYSTHGYIRNVLNRFFLMNRSDRNFEYGIQRDQIGNDTLNHRTFMKYTINQHLSNLKKSQKKGSDPLILISRTERSVNRDPNAYRYKWSKGSKNFQEHLEHFVSEQKSRFQVVFDRYRSIRNRYRSRINQYSSDRSEVSDKKDNRYRSRINQYSSDRSEVSDKKNLAKFRSFVFSKLLLFLSNSLPFFFVSFGNTPPIQRSEIRVSELKGPNDRLCNQFLESIGLQLVYLKKLKPFLLDDHETSQKSKLLFNKKPEGMIDSFHTRNNRGKSLDSYFSMISHDQDNWLNPVKPFHRSSLISSFYKANRLRFLNNPHDFGFFCNKRFPFYVDIKNLDFTYGQFLNILFIRNTKFSLCGDKKKHAFLERDTISSIESQVSNLFKDFPQSGDERYNFYKYFHLAMRSDPLVRRAIYSIADISGTPLTEGQRVNFERTYCQPLSDMNLSDSEGKNLYQYLNFNSNMGLIYSEKCFSSEKRKKKKPEKRKKKKPEKRKEKKPEKRKEKKPEKRKEKKPEKRKEKKPEKRKEKKQSLYLKQWVEKVQMDRALQGERVSLILSNWNLFKTYVMPFSLTSTGYNLLKLMFLDTLGSYVMPLLRSSPKFVSICYAISDPCGISWRILQKKLCLLQWNWISAISNKCFHKLLLSEESIHRNNESPSMTDLRWPNLGEFLYSILFLLFVAGHLVFSHLLFFSQAFSELQRDFARAQSLMIPSYIVELRELLDMYPAPRSFKKLFLAAREKLVNYLRWGGERKSFLIHLFELLNITPNPIDRIAFLKNTRHLSHTSKELYSLITELGDFSSLCSGQRYRYDQIIENVNGPCCLIDDKIESWISNCDAIEDKEREFLVPFCNFTRETRIDQILLSLTHSDHLSNNDSASQMSEEPGAFYLRHLVDIHKKGLMNYECNTSCLAERRIFLAHYQTITYSPCGDNRSHFPSHGKTFSLRLPLHPSRATLVIGSIGSGRSYLVKSLATNSYVPLITVVLNKFLKNWTPQGFDIHESGVYDEYGDDAEEANDYGASFFDFLDNDSDDYEDRDSDDYEPGASDDYEPGDMEDFVDSEMTEWLTKTNVPLVYQLLDDEIDEFYITLQFELAKAMSPCILWIPNIHDLDAKESDYLSLGLLVNHLSRDCGRRSTKNEILVIASTHIPQKVDPSLIGPDGLSTCIKTRRLLVPQQQQCLFTLSYTRGFHLENKMFHTHTNEFESTILGPSVPDLVALTNEALSISITQKKSIIDTTTIRYALHRKTWDLEADRNLSPAKEHGTLFYQVGRAFAHTVLLRNCPIDPISIYIKKNLCEAGDSSLYKWYFELGTSMKKLTILLYLLTCSAGSIAQDLLSPPGPDEQNLITSYGLVENDSDLVHGLSDIVHGLLELEGALVGSSPTEEEVEGTEEEVEGTEDEEVEGTEEEVEGTEDEEGEGTEEEVEGTEDEEGEGTEEEVEGTEEEVEGTEDEEGEGTEDEEVEGTEEEVEGTEDEEGEGTEEEVEGTEEEVEGTEEEVEGTEEEVEGTEDEEVEGTEEEVEGTEDEEGEGTEYEEVEGTEDEEVEGTEKDSSQFDNDRVTLLLRPKPRNPLDIQRLIYQHQKYESELEEDDDDDEDVFAPQKMLEDLFSELVWSPRIWHPWDFILDCEAEIPAEEIPEEEDPLPEEALETEVAVWGEEEEGEADDEEDERLEAQQEDELLEEEDEELKEEEDELHEEEEEEEEEEEEEDELHEEEEEEEEEEEDELQENDSEFFRSETQQPQARDGFSEEEGCFRISQFMWVPGDPLSFLYKDTPFVEVLSYPEEATEISKELLRLLNPKTKRDAPKRARQRWWTKKKQDKHYELVLDRQRWLITKSSLSKSNGFFRSNTPSESYQYLSNLFLSNRRLLDQMTKTFFRKKWLFPDEMKIGFMEQ.

3 disordered regions span residues 172–193 (SSQL…GTED), 225–255 (TEIE…EMNN), and 944–995 (KRKK…KRKE). Over residues 234–244 (KGLSGSSSKSR) the composition is skewed to low complexity. The segment covering 245 to 254 (LFTEGEKEMN) has biased composition (basic and acidic residues). Residues 944 to 959 (KRKKKKPEKRKKKKPE) show a composition bias toward basic residues. Over residues 960–993 (KRKEKKPEKRKEKKPEKRKEKKPEKRKEKKPEKR) the composition is skewed to basic and acidic residues. Residue 1425-1432 (GSIGSGRS) participates in ATP binding. Disordered stretches follow at residues 1499 to 1518 (YEDR…YEPG), 1843 to 2031 (LVGS…LLRP), and 2098 to 2214 (PAEE…DGFS). The span at 1849–2011 (TEEEVEGTEE…VEGTEDEEVE (163 aa)) shows a compositional bias: acidic residues. Residues 2012–2024 (GTEKDSSQFDNDR) are compositionally biased toward basic and acidic residues. 2 stretches are compositionally biased toward acidic residues: residues 2098-2115 (PAEE…EALE) and 2122-2197 (GEEE…ENDS).

The protein belongs to the Ycf2 family.

The protein resides in the plastid. The protein localises to the chloroplast stroma. Functionally, probable ATPase of unknown function. Its presence in a non-photosynthetic plant (Epifagus virginiana) and experiments in tobacco indicate that it has an essential function which is probably not related to photosynthesis. This Oenothera argillicola (Appalachian evening primrose) protein is Protein Ycf2.